Reading from the N-terminus, the 77-residue chain is Large ribosomal subunit protein uL24c (77 aa).

This sequence belongs to the universal ribosomal protein uL24 family. As to quaternary structure, part of the 50S ribosomal subunit.

The protein localises to the plastid. Its subcellular location is the chloroplast. One of two assembly initiator proteins, it binds directly to the 5'-end of the 23S rRNA, where it nucleates assembly of the 50S subunit. The chain is Large ribosomal subunit protein uL24c (rpl24) from Thalassiosira pseudonana (Marine diatom).